We begin with the raw amino-acid sequence, 96 residues long: Small ribosomal subunit protein bS6 (96 aa).

It belongs to the bacterial ribosomal protein bS6 family.

In terms of biological role, binds together with bS18 to 16S ribosomal RNA. This Streptococcus pneumoniae serotype 2 (strain D39 / NCTC 7466) protein is Small ribosomal subunit protein bS6.